We begin with the raw amino-acid sequence, 360 residues long: Phosphoserine aminotransferase (360 aa).

L-glutamate is bound at residue R43. Pyridoxal 5'-phosphate-binding positions include 77-78 (AS), W103, T152, D172, and Q195. K196 bears the N6-(pyridoxal phosphate)lysine mark. 237–238 (NT) provides a ligand contact to pyridoxal 5'-phosphate.

The protein belongs to the class-V pyridoxal-phosphate-dependent aminotransferase family. SerC subfamily. In terms of assembly, homodimer. Requires pyridoxal 5'-phosphate as cofactor.

It localises to the cytoplasm. The catalysed reaction is O-phospho-L-serine + 2-oxoglutarate = 3-phosphooxypyruvate + L-glutamate. It catalyses the reaction 4-(phosphooxy)-L-threonine + 2-oxoglutarate = (R)-3-hydroxy-2-oxo-4-phosphooxybutanoate + L-glutamate. It participates in amino-acid biosynthesis; L-serine biosynthesis; L-serine from 3-phospho-D-glycerate: step 2/3. The protein operates within cofactor biosynthesis; pyridoxine 5'-phosphate biosynthesis; pyridoxine 5'-phosphate from D-erythrose 4-phosphate: step 3/5. Functionally, catalyzes the reversible conversion of 3-phosphohydroxypyruvate to phosphoserine and of 3-hydroxy-2-oxo-4-phosphonooxybutanoate to phosphohydroxythreonine. This is Phosphoserine aminotransferase from Syntrophobacter fumaroxidans (strain DSM 10017 / MPOB).